Here is a 218-residue protein sequence, read N- to C-terminus: Thiopurine S-methyltransferase (218 aa).

Positions 10, 45, 66, and 123 each coordinate S-adenosyl-L-methionine.

This sequence belongs to the class I-like SAM-binding methyltransferase superfamily. TPMT family.

Its subcellular location is the cytoplasm. It catalyses the reaction S-adenosyl-L-methionine + a thiopurine = S-adenosyl-L-homocysteine + a thiopurine S-methylether.. This chain is Thiopurine S-methyltransferase, found in Azotobacter vinelandii (strain DJ / ATCC BAA-1303).